A 138-amino-acid polypeptide reads, in one-letter code: ATP synthase epsilon chain (138 aa).

The protein belongs to the ATPase epsilon chain family. F-type ATPases have 2 components, CF(1) - the catalytic core - and CF(0) - the membrane proton channel. CF(1) has five subunits: alpha(3), beta(3), gamma(1), delta(1), epsilon(1). CF(0) has three main subunits: a, b and c.

It is found in the cell membrane. Functionally, produces ATP from ADP in the presence of a proton gradient across the membrane. This is ATP synthase epsilon chain from Streptococcus equinus (Streptococcus bovis).